The sequence spans 131 residues: MNDTVTIRTRKFMTNRLLQRKQMVIGVLHPGKATVPKTEIREKLAKMYKTTPDVIFVFGFRTHFGGGKTTGFGMIYDSLDYAKKNEPKHRLARHGLYEKKKTSRKQRKERKNRMKKVRGTAKANVGAGKKK.

Residue methionine 1 is modified to N-acetylmethionine. Threonine 9 is modified (phosphothreonine). A Glycyl lysine isopeptide (Lys-Gly) (interchain with G-Cter in SUMO2) cross-link involves residue lysine 37. The segment covering 90–100 (RLARHGLYEKK) has biased composition (basic and acidic residues). The segment at 90–131 (RLARHGLYEKKKTSRKQRKERKNRMKKVRGTAKANVGAGKKK) is disordered. Over residues 101-119 (KTSRKQRKERKNRMKKVRG) the composition is skewed to basic residues.

This sequence belongs to the eukaryotic ribosomal protein eS24 family. Component of the small ribosomal subunit. Part of the small subunit (SSU) processome, composed of more than 70 proteins and the RNA chaperone small nucleolar RNA (snoRNA) U3.

It localises to the cytoplasm. It is found in the nucleus. Its subcellular location is the nucleolus. In terms of biological role, component of the small ribosomal subunit. The ribosome is a large ribonucleoprotein complex responsible for the synthesis of proteins in the cell. Required for processing of pre-rRNA and maturation of 40S ribosomal subunits. Part of the small subunit (SSU) processome, first precursor of the small eukaryotic ribosomal subunit. During the assembly of the SSU processome in the nucleolus, many ribosome biogenesis factors, an RNA chaperone and ribosomal proteins associate with the nascent pre-rRNA and work in concert to generate RNA folding, modifications, rearrangements and cleavage as well as targeted degradation of pre-ribosomal RNA by the RNA exosome. In Macaca fascicularis (Crab-eating macaque), this protein is Small ribosomal subunit protein eS24 (RPS24).